Consider the following 94-residue polypeptide: Small ribosomal subunit protein uS19 (94 aa).

This sequence belongs to the universal ribosomal protein uS19 family.

Its function is as follows. Protein S19 forms a complex with S13 that binds strongly to the 16S ribosomal RNA. This Dictyoglomus thermophilum (strain ATCC 35947 / DSM 3960 / H-6-12) protein is Small ribosomal subunit protein uS19.